The following is a 353-amino-acid chain: S-adenosylmethionine:tRNA ribosyltransferase-isomerase (353 aa).

Belongs to the QueA family. Monomer.

Its subcellular location is the cytoplasm. The enzyme catalyses 7-aminomethyl-7-carbaguanosine(34) in tRNA + S-adenosyl-L-methionine = epoxyqueuosine(34) in tRNA + adenine + L-methionine + 2 H(+). The protein operates within tRNA modification; tRNA-queuosine biosynthesis. Its function is as follows. Transfers and isomerizes the ribose moiety from AdoMet to the 7-aminomethyl group of 7-deazaguanine (preQ1-tRNA) to give epoxyqueuosine (oQ-tRNA). This Baumannia cicadellinicola subsp. Homalodisca coagulata protein is S-adenosylmethionine:tRNA ribosyltransferase-isomerase.